Here is a 629-residue protein sequence, read N- to C-terminus: Arginine--tRNA ligase (629 aa).

The 'HIGH' region signature appears at 128–138 (VNPTKPLHMGH).

It belongs to the class-I aminoacyl-tRNA synthetase family.

It localises to the cytoplasm. It catalyses the reaction tRNA(Arg) + L-arginine + ATP = L-arginyl-tRNA(Arg) + AMP + diphosphate. This Pyrococcus furiosus (strain ATCC 43587 / DSM 3638 / JCM 8422 / Vc1) protein is Arginine--tRNA ligase.